We begin with the raw amino-acid sequence, 349 residues long: Putative methylesterase 12, chloroplastic (349 aa).

The transit peptide at 1 to 77 (MGNRVICMKK…GSTSSRRGTL (77 aa)) directs the protein to the chloroplast. The interval 61 to 80 (GSMSRRIGSTSSRRGTLSDS) is disordered. Ser173 acts as the Acyl-ester intermediate in catalysis. Residues Asp300 and His328 each act as charge relay system in the active site.

This sequence belongs to the AB hydrolase superfamily. Methylesterase family.

It localises to the plastid. It is found in the chloroplast. Its function is as follows. Putative methylesterase. The chain is Putative methylesterase 12, chloroplastic from Arabidopsis thaliana (Mouse-ear cress).